The chain runs to 349 residues: MQTTYLSMGSNIGDRQYYLHEAIRLLGKHPKIMIEKVSNFYESSPVGGVKQDDFTNLALKVATLLEPLELLDFIHEVELSLNRERKIHWGPRTIDIDIIFYGNSEIQEENLIVPHKEAFNRLFVLKPIFELLSNDFKYYEPIREAIAKLSESEQELHVIEEEKSPKNRIEEAVKEILFAVGENPNREGLLETPARVAKMYEEILSSQRLTNFNEYKLFEIDSSKNDSIVLIKDIPFYSMCEHHMLPFFGKAHVAYIPDGGRIIGLSKIPRLVNYVSRKLSVQENITHDIADILTDILKPKGVAVLVEGRHMCVEMRGVKKVNSLTKTSYFLGEFKENGEKRMEFLESLL.

Positions 1–226 (MQTTYLSMGS…LFEIDSSKND (226 aa)) are 2-amino-4-hydroxy-6-hydroxymethyldihydropteridine pyrophosphokinase. The GTP cyclohydrolase 1 stretch occupies residues 226-349 (DSIVLIKDIP…KRMEFLESLL (124 aa)).

The protein in the N-terminal section; belongs to the HPPK family. In the C-terminal section; belongs to the GTP cyclohydrolase I family. Homomer.

The catalysed reaction is 6-hydroxymethyl-7,8-dihydropterin + ATP = (7,8-dihydropterin-6-yl)methyl diphosphate + AMP + H(+). The enzyme catalyses GTP + H2O = 7,8-dihydroneopterin 3'-triphosphate + formate + H(+). The protein operates within cofactor biosynthesis; 7,8-dihydroneopterin triphosphate biosynthesis; 7,8-dihydroneopterin triphosphate from GTP: step 1/1. It participates in cofactor biosynthesis; tetrahydrofolate biosynthesis; 2-amino-4-hydroxy-6-hydroxymethyl-7,8-dihydropteridine diphosphate from 7,8-dihydroneopterin triphosphate: step 4/4. The sequence is that of Bifunctional protein FolKE (folKE) from Lactococcus lactis subsp. cremoris (strain MG1363).